Consider the following 141-residue polypeptide: Calcitonin (141 aa).

A signal peptide spans 1–25; the sequence is MGFQKFSPFLALSILVLLQAGSLHA. The propeptide occupies 26 to 82; sequence APFRSALESSPADPATLSEDEARLLLAALVQDYVQMKASELEQEQEREGSSLDSPRS. Ser43 is modified (phosphoserine). Disordered stretches follow at residues 64–85 and 111–141; these read SELE…SKRC and IGVG…QNAN. Cysteines 85 and 91 form a disulfide. Pro116 is modified (proline amide). Residues 118–132 show a composition bias toward basic and acidic residues; sequence KKRDMSSDLERDHRP.

It belongs to the calcitonin family.

It is found in the secreted. Its function is as follows. Calcitonin is a peptide hormone that causes a rapid but short-lived drop in the level of calcium and phosphate in blood by promoting the incorporation of those ions in the bones. Calcitonin function is mediated by the calcitonin receptor/CALCR and the CALCR-RAMP2 (AMYR2) receptor complex. Katacalcin is a potent plasma calcium-lowering peptide. This is Calcitonin from Homo sapiens (Human).